The sequence spans 73 residues: MAKDDVIEVEGKVVDTLPNAMFKVELENGATILAHVSGKIRMHYIRILPGDRVTVELSPYDLTKGRITYRFIK.

Residues methionine 1 to isoleucine 72 enclose the S1-like domain.

The protein belongs to the IF-1 family. In terms of assembly, component of the 30S ribosomal translation pre-initiation complex which assembles on the 30S ribosome in the order IF-2 and IF-3, IF-1 and N-formylmethionyl-tRNA(fMet); mRNA recruitment can occur at any time during PIC assembly.

The protein localises to the cytoplasm. Functionally, one of the essential components for the initiation of protein synthesis. Stabilizes the binding of IF-2 and IF-3 on the 30S subunit to which N-formylmethionyl-tRNA(fMet) subsequently binds. Helps modulate mRNA selection, yielding the 30S pre-initiation complex (PIC). Upon addition of the 50S ribosomal subunit IF-1, IF-2 and IF-3 are released leaving the mature 70S translation initiation complex. This Lactobacillus acidophilus (strain ATCC 700396 / NCK56 / N2 / NCFM) protein is Translation initiation factor IF-1.